The sequence spans 425 residues: Tryptophan synthase beta chain (425 aa).

Lys-107 carries the post-translational modification N6-(pyridoxal phosphate)lysine.

The protein belongs to the TrpB family. In terms of assembly, tetramer of two alpha and two beta chains. It depends on pyridoxal 5'-phosphate as a cofactor.

The catalysed reaction is (1S,2R)-1-C-(indol-3-yl)glycerol 3-phosphate + L-serine = D-glyceraldehyde 3-phosphate + L-tryptophan + H2O. It participates in amino-acid biosynthesis; L-tryptophan biosynthesis; L-tryptophan from chorismate: step 5/5. Functionally, the beta subunit is responsible for the synthesis of L-tryptophan from indole and L-serine. The chain is Tryptophan synthase beta chain from Synechococcus sp. (strain JA-2-3B'a(2-13)) (Cyanobacteria bacterium Yellowstone B-Prime).